The chain runs to 195 residues: Imidazoleglycerol-phosphate dehydratase (195 aa).

This sequence belongs to the imidazoleglycerol-phosphate dehydratase family.

Its subcellular location is the cytoplasm. The enzyme catalyses D-erythro-1-(imidazol-4-yl)glycerol 3-phosphate = 3-(imidazol-4-yl)-2-oxopropyl phosphate + H2O. It participates in amino-acid biosynthesis; L-histidine biosynthesis; L-histidine from 5-phospho-alpha-D-ribose 1-diphosphate: step 6/9. In Haloarcula marismortui (strain ATCC 43049 / DSM 3752 / JCM 8966 / VKM B-1809) (Halobacterium marismortui), this protein is Imidazoleglycerol-phosphate dehydratase.